Reading from the N-terminus, the 533-residue chain is Phosphoenolpyruvate carboxykinase (ATP) (533 aa).

Residues arginine 59, tyrosine 199, and lysine 205 each contribute to the substrate site. ATP contacts are provided by residues lysine 205, histidine 224, and 240–248; that span reads GLSGTGKTT. Residues lysine 205 and histidine 224 each contribute to the Mn(2+) site. Aspartate 261 contributes to the Mn(2+) binding site. Residues glutamate 289, arginine 325, 441 to 442, and threonine 447 contribute to the ATP site; that span reads RI. Residue arginine 325 coordinates substrate.

Belongs to the phosphoenolpyruvate carboxykinase (ATP) family. In terms of assembly, monomer. The cofactor is Mn(2+).

The protein resides in the cytoplasm. The enzyme catalyses oxaloacetate + ATP = phosphoenolpyruvate + ADP + CO2. It functions in the pathway carbohydrate biosynthesis; gluconeogenesis. Functionally, involved in the gluconeogenesis. Catalyzes the conversion of oxaloacetate (OAA) to phosphoenolpyruvate (PEP) through direct phosphoryl transfer between the nucleoside triphosphate and OAA. In Idiomarina loihiensis (strain ATCC BAA-735 / DSM 15497 / L2-TR), this protein is Phosphoenolpyruvate carboxykinase (ATP).